A 4588-amino-acid chain; its full sequence is Protocadherin Fat 1 (4588 aa).

Positions 1 to 21 are cleaved as a signal peptide; the sequence is MGRHLALLLLLLLLFQHFGDS. Residues 22-4181 lie on the Extracellular side of the membrane; sequence DGSQRLEQTP…STPWNIGLAE (4160 aa). Cadherin domains follow at residues 35–149 and 150–257; these read THLE…RPLF and SPTS…APVI. Asparagine 40 is a glycosylation site (N-linked (GlcNAc...) asparagine). N-linked (GlcNAc...) asparagine glycosylation occurs at asparagine 333. 31 Cadherin domains span residues 368 to 463, 464 to 569, 570 to 673, 718 to 822, 823 to 927, 928 to 1034, 1035 to 1139, 1140 to 1245, 1246 to 1357, 1359 to 1456, 1457 to 1562, 1563 to 1667, 1668 to 1765, 1766 to 1879, 1880 to 1979, 1980 to 2081, 2082 to 2182, 2183 to 2283, 2284 to 2390, 2391 to 2492, 2493 to 2596, 2597 to 2703, 2704 to 2809, 2810 to 2918, 2919 to 3023, 3024 to 3125, 3126 to 3230, 3231 to 3335, 3336 to 3440, 3441 to 3545, and 3546 to 3647; these read EKDV…PPEF, TQTA…TPLF, EKIN…VNLQ, STLP…PPEF, LQES…PPTF, IPPN…PPVF, SSFV…APQT, SEPV…KPQF, LQKF…EPIS, EESF…RPQF, STSK…APWF, TASS…SPKF, TSKE…APVF, MQAE…PPVF, AKPL…HLKF, TQDV…APVF, VNLP…MPVF, EKPF…PPVF, AQQS…PPLF, EQQI…SPAF, LQNE…APQF, RATK…LPKF, SEPF…SPVF, ESSP…PPRF, TAEI…SPVC, EKTL…APEF, SADP…PPVF, EYRE…TPVF, SQDT…APVF, SRGN…PPAI, and LPLE…AIRF. Asparagine 660, asparagine 740, and asparagine 791 each carry an N-linked (GlcNAc...) asparagine glycan. Asparagine 998 carries an N-linked (GlcNAc...) asparagine glycan. N-linked (GlcNAc...) asparagine glycans are attached at residues asparagine 1426 and asparagine 1551. N-linked (GlcNAc...) asparagine glycosylation is found at asparagine 1748, asparagine 1864, asparagine 1902, asparagine 1940, and asparagine 1991. Residues asparagine 2325 and asparagine 2464 are each glycosylated (N-linked (GlcNAc...) asparagine). 6 N-linked (GlcNAc...) asparagine glycosylation sites follow: asparagine 3324, asparagine 3422, asparagine 3444, asparagine 3613, asparagine 3640, and asparagine 3716. An EGF-like 1 domain is found at 3790 to 3827; the sequence is VHHGCEDDPCPEGSECVSDPWEEKHTCVCPSGRFGQCP. Disulfide bonds link cysteine 3794–cysteine 3805, cysteine 3799–cysteine 3816, cysteine 3818–cysteine 3826, cysteine 3976–cysteine 4009, cysteine 4017–cysteine 4028, cysteine 4022–cysteine 4038, cysteine 4040–cysteine 4049, cysteine 4056–cysteine 4067, cysteine 4061–cysteine 4076, cysteine 4078–cysteine 4087, cysteine 4093–cysteine 4104, cysteine 4098–cysteine 4113, cysteine 4115–cysteine 4124, cysteine 4131–cysteine 4142, and cysteine 4136–cysteine 4151. The 181-residue stretch at 3829–4009 folds into the Laminin G-like domain; that stretch reads SSSMTLTGNS…EESVDVSPGC (181 aa). EGF-like domains follow at residues 4013–4050, 4052–4088, and 4089–4125; these read ATEDCASNPCQNGGVCNPSPAGGYYCKCSALYIGTHCE, SVNPCSSKPCLYGGTCVVDNGGFVCQCRGLYTGQRCQ, and LSPYCKDEPCKNGGTCFDSLDGAVCQCDSGFRGERCQ. The 37-residue stretch at 4127 to 4163 folds into the EGF-like 5; calcium-binding domain; the sequence is DIDECSGNPCLHGALCENTHGSYHCNCSHEYRGRHCE. Asparagine 4152 carries N-linked (GlcNAc...) asparagine glycosylation. Cysteines 4153 and 4162 form a disulfide. The helical transmembrane segment at 4182-4202 threads the bilayer; it reads GIGIVVFVAGIFLLVVVFVLC. The Cytoplasmic portion of the chain corresponds to 4203 to 4588; that stretch reads RKMISRKKKH…PLDSQQHTEV (386 aa). The short motif at 4204–4214 is the Nuclear localization signal element; the sequence is KMISRKKKHQA. Disordered regions lie at residues 4255 to 4275, 4303 to 4327, and 4343 to 4376; these read SYTPSIPSDSRNNLDRNSFEG, SVAPNLPPPPPSNSPSDSDSIQKPS, and LSKKPLEEKPSQPYSARESLSEVQSLSSFQSESC. Positions 4256-4265 are enriched in polar residues; it reads YTPSIPSDSR. Residues 4363-4374 show a composition bias toward polar residues; it reads SEVQSLSSFQSE. Residues 4378–4382 carry the PTB-like motif motif; it reads DNGYH. 2 disordered regions span residues 4435–4479 and 4565–4588; these read FPPP…SSSR and ESGDDGHFEEVTIPPLDSQQHTEV.

As to quaternary structure, interacts (via the C-terminus 4300-4400 AA) with ATN1. Interacts with RERE. Post-translationally, undergoes proteolytic cleavage. The extracellular domain is cleaved off and the cytoplasmic domain (about 400 AA) shuttles to the nucleus. As to expression, expressed in many epithelial and some endothelial and smooth muscle cells.

The protein localises to the cell membrane. It is found in the nucleus. Its function is as follows. Plays an essential role for cellular polarization, directed cell migration and modulating cell-cell contact. In Homo sapiens (Human), this protein is Protocadherin Fat 1 (FAT1).